The primary structure comprises 403 residues: Cystinosin homolog (403 aa).

Residues 1–122 (MKLPVSILFF…YSRITVIRSH (122 aa)) are Lumenal-facing. Residues asparagine 45, asparagine 52, asparagine 78, and asparagine 96 are each glycosylated (N-linked (GlcNAc...) asparagine). Residues 123 to 143 (WLAILIQIVGWTYFAAWSVSF) traverse the membrane as a helical segment. The PQ-loop 1 domain maps to 124-190 (LAILIQIVGW…MYYNSHVKNI (67 aa)). Topologically, residues 144-162 (YPQMYLNFKRKSVVGLNFD) are cytoplasmic. The helical transmembrane segment at 163 to 183 (FLSLNLVGFGAYAMFNLLMYY) threads the bilayer. The Lumenal segment spans residues 184–206 (NSHVKNIYSMENPRSPPPVLLND). A helical transmembrane segment spans residues 207 to 227 (VVFAVHAFLACFVTILQCIFY). The Cytoplasmic segment spans residues 228–237 (ERDQQRISTK). The chain crosses the membrane as a helical span at residues 238–258 (CIILIIGLVSFGFVSVVVTVL). At 259-260 (NK) the chain is on the lumenal side. Residues 261-283 (ITILDFVVSLSYIKMAVTCCKYF) form a helical membrane-spanning segment. Residues 266-326 (FVVSLSYIKM…MVLQAINVND (61 aa)) form the PQ-loop 2 domain. The Cytoplasmic segment spans residues 284–294 (PQAYFNYQRKS). A helical transmembrane segment spans residues 295–315 (TVGWSIGNILLDFTGGSLDIL). The Lumenal segment spans residues 316–336 (QMVLQAINVNDWSAFYANPVK). Residues 337–357 (FGLGFVSIFFDIIFMIQHYAL) form a helical membrane-spanning segment. At 358-403 (YPDAEVPHNEYHGVDNPDPDSIVRDAEHGAADNESMESTDPIIVHD) the chain is on the cytoplasmic side. The span at 374–388 (PDPDSIVRDAEHGAA) shows a compositional bias: basic and acidic residues. The interval 374-403 (PDPDSIVRDAEHGAADNESMESTDPIIVHD) is disordered.

Belongs to the cystinosin family.

The protein localises to the lysosome membrane. Its subcellular location is the cytoplasmic vesicle. The protein resides in the phagosome. The catalysed reaction is L-cystine(out) + H(+)(out) = L-cystine(in) + H(+)(in). In terms of biological role, cystine/H(+) symporter that mediates export of cystine, the oxidized dimer of cysteine, from lysosomes. May play a role in the degradation of engulfed apoptotic cells. In Caenorhabditis briggsae, this protein is Cystinosin homolog (ctns-1).